Here is a 536-residue protein sequence, read N- to C-terminus: Phosphoenolpyruvate carboxykinase (ATP) (536 aa).

The substrate site is built by Arg61, Tyr195, and Lys201. ATP contacts are provided by residues Lys201, His220, and 236 to 244; that span reads GLSGTGKTT. Mn(2+) is bound by residues Lys201 and His220. Asp257 is a Mn(2+) binding site. 3 residues coordinate ATP: Glu285, Arg322, and Thr447. Residue Arg322 participates in substrate binding.

It belongs to the phosphoenolpyruvate carboxykinase (ATP) family. It depends on Mn(2+) as a cofactor.

The protein resides in the cytoplasm. The enzyme catalyses oxaloacetate + ATP = phosphoenolpyruvate + ADP + CO2. It functions in the pathway carbohydrate biosynthesis; gluconeogenesis. Involved in the gluconeogenesis. Catalyzes the conversion of oxaloacetate (OAA) to phosphoenolpyruvate (PEP) through direct phosphoryl transfer between the nucleoside triphosphate and OAA. In Chelativorans sp. (strain BNC1), this protein is Phosphoenolpyruvate carboxykinase (ATP).